A 483-amino-acid chain; its full sequence is Betaine aldehyde dehydrogenase (483 aa).

K(+) contacts are provided by isoleucine 27 and aspartate 93. Position 149–151 (149–151) interacts with NAD(+); it reads GAW. The active-site Charge relay system is the lysine 161. 175–178 contacts NAD(+); the sequence is KPSE. Valine 179 serves as a coordination point for K(+). 228-231 is an NAD(+) binding site; that stretch reads SVPT. K(+) is bound at residue valine 243. The active-site Proton acceptor is glutamate 249. Glycine 251, cysteine 283, and glutamate 380 together coordinate NAD(+). Cysteine 283 (nucleophile) is an active-site residue. Cysteine 283 is modified (cysteine sulfenic acid (-SOH)). K(+) contacts are provided by lysine 450 and glycine 453. Residue glutamate 457 is the Charge relay system of the active site.

It belongs to the aldehyde dehydrogenase family. As to quaternary structure, dimer of dimers. K(+) serves as cofactor.

The enzyme catalyses betaine aldehyde + NAD(+) + H2O = glycine betaine + NADH + 2 H(+). It participates in amine and polyamine biosynthesis; betaine biosynthesis via choline pathway; betaine from betaine aldehyde: step 1/1. Involved in the biosynthesis of the osmoprotectant glycine betaine. Catalyzes the irreversible oxidation of betaine aldehyde to the corresponding acid. The protein is Betaine aldehyde dehydrogenase of Cereibacter sphaeroides (strain ATCC 17029 / ATH 2.4.9) (Rhodobacter sphaeroides).